A 200-amino-acid polypeptide reads, in one-letter code: THO complex subunit tho5 (200 aa).

It belongs to the THOC5 family. Component of the THO and TREX complexes.

The protein localises to the cytoplasm. It localises to the nucleus. Functionally, component the THO subcomplex of the TREX complex, which operates in coupling transcription elongation to mRNA export. The THO complex is recruited to transcribed genes and moves along the gene with the elongating polymerase during transcription. THO is important for stabilizing nascent RNA in the RNA polymerase II elongation complex by preventing formation of DNA:RNA hybrids behind the elongating polymerase. The THO complex is also required to maintain TRAMP complex occupancy at sites of snoRNA transcription thus promoting exosome-mediated degradation of snoRNA precursors. This is THO complex subunit tho5 from Schizosaccharomyces pombe (strain 972 / ATCC 24843) (Fission yeast).